Here is a 404-residue protein sequence, read N- to C-terminus: Tyrosine--tRNA ligase (404 aa).

The short motif at 45–54 (PTAPDLHLGH) is the 'HIGH' region element. The 'KMSKS' region signature appears at 229 to 233 (KMSKS). K232 contacts ATP. The 61-residue stretch at 342–402 (IFIASIVRLA…GKKAIAQVTF (61 aa)) folds into the S4 RNA-binding domain.

The protein belongs to the class-I aminoacyl-tRNA synthetase family. TyrS type 2 subfamily. As to quaternary structure, homodimer.

Its subcellular location is the cytoplasm. The enzyme catalyses tRNA(Tyr) + L-tyrosine + ATP = L-tyrosyl-tRNA(Tyr) + AMP + diphosphate + H(+). Its function is as follows. Catalyzes the attachment of tyrosine to tRNA(Tyr) in a two-step reaction: tyrosine is first activated by ATP to form Tyr-AMP and then transferred to the acceptor end of tRNA(Tyr). The sequence is that of Tyrosine--tRNA ligase from Acinetobacter baylyi (strain ATCC 33305 / BD413 / ADP1).